The sequence spans 684 residues: Glycine--tRNA ligase beta subunit (684 aa).

This sequence belongs to the class-II aminoacyl-tRNA synthetase family. As to quaternary structure, tetramer of two alpha and two beta subunits.

It is found in the cytoplasm. The catalysed reaction is tRNA(Gly) + glycine + ATP = glycyl-tRNA(Gly) + AMP + diphosphate. The protein is Glycine--tRNA ligase beta subunit of Pseudomonas entomophila (strain L48).